The following is an 802-amino-acid chain: LPS-assembly protein LptD (802 aa).

The first 25 residues, 1–25, serve as a signal peptide directing secretion; the sequence is MARLFSLKPLVLALGLCFGTHCAAA.

This sequence belongs to the LptD family. As to quaternary structure, component of the lipopolysaccharide transport and assembly complex. Interacts with LptE and LptA.

The protein resides in the cell outer membrane. Together with LptE, is involved in the assembly of lipopolysaccharide (LPS) at the surface of the outer membrane. This Neisseria meningitidis serogroup B (strain ATCC BAA-335 / MC58) protein is LPS-assembly protein LptD.